The following is a 396-amino-acid chain: MAKAKFERTKPHCNIGTIGHVDHGKTSLTAAITKVLAETGGATFTAYDQIDKAPEEKARGITISTAHVEYETTNRHYAHVDCPGHADYVKNMITGAAQMDGGILVVSAADGPMPQTREHILLARQVGVPALVVFLNKCDMVDDPELLELVEMEVRELLSKYDFPGDDIPIIKGSALAALENSDQKLGHDAILELMKAVDAYIPQPERPIDQPFLMPVEDVFSISGRGTVVTGRVERGIVKVGEEIEIVGIRDTQKTTCTGVEMFRKLLDQGQAGDNIGCLLRGTKREDVERGQVLCKPGSVKPHTKFKAEAYILTKEEGGRHTPFFTNYRPQFYFRTTDVTGVVHLPEGTEMVMPGDNIAMEVHLIVPIAMEEKLRFAIREGGRTVGAGVVASIIE.

Residues 10–206 (KPHCNIGTIG…AVDAYIPQPE (197 aa)) enclose the tr-type G domain. Residues 19 to 26 (GHVDHGKT) are G1. 19–26 (GHVDHGKT) is a GTP binding site. Thr-26 is a Mg(2+) binding site. Positions 60-64 (GITIS) are G2. Residues 81-84 (DCPG) are G3. Residues 81-85 (DCPGH) and 136-139 (NKCD) contribute to the GTP site. The G4 stretch occupies residues 136–139 (NKCD). The segment at 174 to 176 (SAL) is G5.

It belongs to the TRAFAC class translation factor GTPase superfamily. Classic translation factor GTPase family. EF-Tu/EF-1A subfamily. As to quaternary structure, monomer.

It localises to the cytoplasm. The enzyme catalyses GTP + H2O = GDP + phosphate + H(+). In terms of biological role, GTP hydrolase that promotes the GTP-dependent binding of aminoacyl-tRNA to the A-site of ribosomes during protein biosynthesis. The protein is Elongation factor Tu of Rhodopseudomonas palustris (strain HaA2).